A 202-amino-acid polypeptide reads, in one-letter code: MARYRGARLRITRRLGELPGLTRKSARREYPPGQHGQGRRKRSEYAIRLEEKQKLRFNYGVSEKQLIRYVRKARRTTGSTGQTILQLLEMRLDNTVFRLGMAGTIPGARQLVNHGHILVNGRVVDIPSYQCRPGDVITVRDRDRSRKLIEANMEFPGLANIPSHLEFDKPTLTGKVNGIIEREWVALQINELLVVEYYSRMA.

Positions 18-44 are disordered; sequence LPGLTRKSARREYPPGQHGQGRRKRSE. Residues 90-152 form the S4 RNA-binding domain; that stretch reads MRLDNTVFRL…DRSRKLIEAN (63 aa).

The protein belongs to the universal ribosomal protein uS4 family. As to quaternary structure, part of the 30S ribosomal subunit. Contacts protein S5. The interaction surface between S4 and S5 is involved in control of translational fidelity.

Functionally, one of the primary rRNA binding proteins, it binds directly to 16S rRNA where it nucleates assembly of the body of the 30S subunit. With S5 and S12 plays an important role in translational accuracy. The polypeptide is Small ribosomal subunit protein uS4 (Picosynechococcus sp. (strain ATCC 27264 / PCC 7002 / PR-6) (Agmenellum quadruplicatum)).